A 250-amino-acid chain; its full sequence is 2,3-bisphosphoglycerate-dependent phosphoglycerate mutase (250 aa).

Substrate contacts are provided by residues 10-17 (RHGESQWN), 23-24 (TG), R62, 89-92 (ERHY), K100, 116-117 (RR), and 185-186 (GN). The Tele-phosphohistidine intermediate role is filled by H11. E89 acts as the Proton donor/acceptor in catalysis.

It belongs to the phosphoglycerate mutase family. BPG-dependent PGAM subfamily. In terms of assembly, homodimer.

The enzyme catalyses (2R)-2-phosphoglycerate = (2R)-3-phosphoglycerate. Its pathway is carbohydrate degradation; glycolysis; pyruvate from D-glyceraldehyde 3-phosphate: step 3/5. Functionally, catalyzes the interconversion of 2-phosphoglycerate and 3-phosphoglycerate. This is 2,3-bisphosphoglycerate-dependent phosphoglycerate mutase from Yersinia enterocolitica serotype O:8 / biotype 1B (strain NCTC 13174 / 8081).